A 374-amino-acid polypeptide reads, in one-letter code: Putative glutamate--cysteine ligase 2-2 (374 aa).

It belongs to the glutamate--cysteine ligase type 2 family. YbdK subfamily.

The catalysed reaction is L-cysteine + L-glutamate + ATP = gamma-L-glutamyl-L-cysteine + ADP + phosphate + H(+). Its function is as follows. ATP-dependent carboxylate-amine ligase which exhibits weak glutamate--cysteine ligase activity. This is Putative glutamate--cysteine ligase 2-2 from Rhodococcus jostii (strain RHA1).